A 2352-amino-acid polypeptide reads, in one-letter code: Cell wall alpha-1,3-glucan synthase mok12 (2352 aa).

Residues Ser1786–Tyr1813 are disordered. Residues Asp1798–Tyr1813 show a composition bias toward polar residues.

The protein belongs to the glycosyltransferase group 1 family.

It catalyses the reaction [(1-&gt;3)-alpha-D-glucosyl](n) + UDP-alpha-D-glucose = [(1-&gt;3)-alpha-D-glucosyl](n+1) + UDP + H(+). This is Cell wall alpha-1,3-glucan synthase mok12 (mok12) from Schizosaccharomyces pombe (strain 972 / ATCC 24843) (Fission yeast).